The chain runs to 58 residues: Small ribosomal subunit protein uS14 (58 aa).

The tract at residues 1-21 is disordered; it reads MSESETEQTGEHASHRTGQTH. Positions 9-21 are enriched in basic and acidic residues; it reads TGEHASHRTGQTH. Zn(2+) is bound by residues Cys-23, Cys-26, Cys-41, and Cys-44.

This sequence belongs to the universal ribosomal protein uS14 family. Zinc-binding uS14 subfamily. In terms of assembly, part of the 30S ribosomal subunit. Zn(2+) serves as cofactor.

Binds 16S rRNA, required for the assembly of 30S particles. This is Small ribosomal subunit protein uS14 from Haloquadratum walsbyi (strain DSM 16790 / HBSQ001).